Consider the following 365-residue polypeptide: Protein-glutamate methylesterase/protein-glutamine glutaminase (365 aa).

A Response regulatory domain is found at 5–122 (KVLIVDDSAF…SLDIRKIGEK (118 aa)). Residue Asp-56 is modified to 4-aspartylphosphate. Positions 146 to 155 (IKKEKQDESS) are enriched in basic and acidic residues. Residues 146 to 167 (IKKEKQDESSTPKPQVEKTSGL) form a disordered region. A compositionally biased stretch (polar residues) spans 156–167 (TPKPQVEKTSGL). A CheB-type methylesterase domain is found at 177-363 (ILIGSSTGGP…LEIIKFAKKI (187 aa)). Residues Ser-182, His-208, and Asp-305 contribute to the active site.

Belongs to the CheB family. Phosphorylated by CheA. Phosphorylation of the N-terminal regulatory domain activates the methylesterase activity.

It localises to the cytoplasm. It carries out the reaction [protein]-L-glutamate 5-O-methyl ester + H2O = L-glutamyl-[protein] + methanol + H(+). The catalysed reaction is L-glutaminyl-[protein] + H2O = L-glutamyl-[protein] + NH4(+). Involved in chemotaxis. Part of a chemotaxis signal transduction system that modulates chemotaxis in response to various stimuli. Catalyzes the demethylation of specific methylglutamate residues introduced into the chemoreceptors (methyl-accepting chemotaxis proteins or MCP) by CheR. Also mediates the irreversible deamidation of specific glutamine residues to glutamic acid. In Methanococcus maripaludis (strain DSM 14266 / JCM 13030 / NBRC 101832 / S2 / LL), this protein is Protein-glutamate methylesterase/protein-glutamine glutaminase.